Here is a 383-residue protein sequence, read N- to C-terminus: Cell division protein FtsZ (383 aa).

Residues 20-24 (GGGGN), 107-109 (GTG), glutamate 138, arginine 142, and asparagine 186 contribute to the GTP site.

This sequence belongs to the FtsZ family. In terms of assembly, homodimer. Polymerizes to form a dynamic ring structure in a strictly GTP-dependent manner. Interacts directly with several other division proteins.

The protein localises to the cytoplasm. Functionally, essential cell division protein that forms a contractile ring structure (Z ring) at the future cell division site. The regulation of the ring assembly controls the timing and the location of cell division. One of the functions of the FtsZ ring is to recruit other cell division proteins to the septum to produce a new cell wall between the dividing cells. Binds GTP and shows GTPase activity. This Shigella flexneri protein is Cell division protein FtsZ.